A 503-amino-acid chain; its full sequence is Putative ribose/galactose/methyl galactoside import ATP-binding protein (503 aa).

ABC transporter domains lie at Leu7–Glu244 and Val254–Leu498. Gly39–Ser46 serves as a coordination point for ATP.

This sequence belongs to the ABC transporter superfamily. Carbohydrate importer 2 (CUT2) (TC 3.A.1.2) family.

It is found in the cell membrane. It catalyses the reaction D-ribose(out) + ATP + H2O = D-ribose(in) + ADP + phosphate + H(+). The enzyme catalyses D-galactose(out) + ATP + H2O = D-galactose(in) + ADP + phosphate + H(+). Part of an ABC transporter complex involved in carbohydrate import. Could be involved in ribose, galactose and/or methyl galactoside import. Responsible for energy coupling to the transport system. The sequence is that of Putative ribose/galactose/methyl galactoside import ATP-binding protein from Geobacillus kaustophilus (strain HTA426).